Consider the following 255-residue polypeptide: Triosephosphate isomerase (255 aa).

Asn-9–Lys-11 is a substrate binding site. His-96 acts as the Electrophile in catalysis. Residue Glu-170 is the Proton acceptor of the active site. Substrate contacts are provided by residues Gly-176, Ser-216, and Gly-237–Gly-238.

Belongs to the triosephosphate isomerase family. In terms of assembly, homodimer.

It is found in the cytoplasm. The enzyme catalyses D-glyceraldehyde 3-phosphate = dihydroxyacetone phosphate. Its pathway is carbohydrate biosynthesis; gluconeogenesis. It functions in the pathway carbohydrate degradation; glycolysis; D-glyceraldehyde 3-phosphate from glycerone phosphate: step 1/1. In terms of biological role, involved in the gluconeogenesis. Catalyzes stereospecifically the conversion of dihydroxyacetone phosphate (DHAP) to D-glyceraldehyde-3-phosphate (G3P). The sequence is that of Triosephosphate isomerase from Magnetococcus marinus (strain ATCC BAA-1437 / JCM 17883 / MC-1).